The primary structure comprises 210 residues: Adenylate kinase (210 aa).

An ATP-binding site is contributed by 10–15 (GSGKGT). The NMP stretch occupies residues 28–57 (SVGKVLRTVMESNTAEADVVKKFIKSGKLV). AMP-binding positions include arginine 34, 55–57 (KLV), 83–86 (GYPR), and glutamine 90. An LID region spans residues 120–158 (GRISCTDCGTIYNKLYCMPKINGVCDICNSSSFQNRVDD). ATP is bound at residue arginine 121. Zn(2+) is bound by residues cysteine 124 and cysteine 127. Position 130–131 (130–131 (IY)) interacts with ATP. Cysteine 144 and cysteine 147 together coordinate Zn(2+). Residues arginine 155 and arginine 166 each contribute to the AMP site. Residue glutamine 194 coordinates ATP.

It belongs to the adenylate kinase family. In terms of assembly, monomer.

The protein localises to the cytoplasm. It carries out the reaction AMP + ATP = 2 ADP. It functions in the pathway purine metabolism; AMP biosynthesis via salvage pathway; AMP from ADP: step 1/1. Catalyzes the reversible transfer of the terminal phosphate group between ATP and AMP. Plays an important role in cellular energy homeostasis and in adenine nucleotide metabolism. This Orientia tsutsugamushi (strain Boryong) (Rickettsia tsutsugamushi) protein is Adenylate kinase.